A 197-amino-acid chain; its full sequence is Thymidine kinase (197 aa).

ATP-binding positions include 9–16 (SAMDAGKT) and 87–90 (DEIH). E88 acts as the Proton acceptor in catalysis. Zn(2+) is bound by residues C145, C147, C187, and H190.

It belongs to the thymidine kinase family. Homotetramer.

The protein localises to the cytoplasm. The enzyme catalyses thymidine + ATP = dTMP + ADP + H(+). The polypeptide is Thymidine kinase (Francisella tularensis subsp. holarctica (strain LVS)).